Consider the following 106-residue polypeptide: Integration host factor subunit alpha (106 aa).

Belongs to the bacterial histone-like protein family. Heterodimer of an alpha and a beta chain.

Its function is as follows. This protein is one of the two subunits of integration host factor, a specific DNA-binding protein that functions in genetic recombination as well as in transcriptional and translational control. This is Integration host factor subunit alpha from Paramagnetospirillum magneticum (strain ATCC 700264 / AMB-1) (Magnetospirillum magneticum).